The primary structure comprises 80 residues: MASKKPENMSFESTIEELEQLVEQLESGDLALDEALRKFERGISLARAGQLKLDDAEQRVRILLSNSDDAPLSDFSDVAE.

This sequence belongs to the XseB family. As to quaternary structure, heterooligomer composed of large and small subunits.

It localises to the cytoplasm. The catalysed reaction is Exonucleolytic cleavage in either 5'- to 3'- or 3'- to 5'-direction to yield nucleoside 5'-phosphates.. In terms of biological role, bidirectionally degrades single-stranded DNA into large acid-insoluble oligonucleotides, which are then degraded further into small acid-soluble oligonucleotides. The chain is Exodeoxyribonuclease 7 small subunit from Vibrio cholerae serotype O1 (strain ATCC 39541 / Classical Ogawa 395 / O395).